We begin with the raw amino-acid sequence, 339 residues long: Serine/arginine-rich splicing factor 6 (339 aa).

In terms of domain architecture, RRM 1 spans 2–72 (PRVYIGRLSY…ERVIVEHARG (71 aa)). 3 positions are modified to phosphoserine: Ser45, Ser81, and Ser84. Residues 75–103 (RDRDGYSYGSRSGGGGYSSRRTSGRDKYG) form a disordered region. Residues 110–183 (YRLIVENLSS…RNIRLIEDKP (74 aa)) form the RRM 2 domain. An N6-acetyllysine modification is found at Lys165. Positions 176–339 (IRLIEDKPRT…RSRSRSSSRD (164 aa)) are disordered. A Glycyl lysine isopeptide (Lys-Gly) (interchain with G-Cter in SUMO2) cross-link involves residue Lys182. Basic residues predominate over residues 185 to 250 (TSHRRSYSGS…RKSRSKSKSK (66 aa)). The segment covering 280 to 291 (SPKENGKGDIKS) has biased composition (basic and acidic residues). Residues Ser297 and Ser299 each carry the phosphoserine modification. Residue Ser303 is modified to Phosphoserine; by DYRK1A. Ser314 and Ser316 each carry phosphoserine. Residues 321-339 (RASRSRSRSRSRSRSSSRD) show a composition bias toward basic residues.

This sequence belongs to the splicing factor SR family. Binds SREK1/SFRS12. Interacts with DYRK1A. Interacts with RBMY; the interaction inhibits SRSF6 pre-mRNA splicing. In terms of processing, extensively phosphorylated on serine residues in the RS domain. Phosphorylated by DYRK1A, probably in the RS domain. Phosphorylation by DYRK1A modulates alternative splice site selection and inhibits the expression of MAPT/Tau exon 10.

The protein resides in the nucleus. It is found in the nucleus speckle. In terms of biological role, plays a role in constitutive splicing and modulates the selection of alternative splice sites. Plays a role in the alternative splicing of MAPT/Tau exon 10. Binds to alternative exons of TNC pre-mRNA and promotes the expression of alternatively spliced TNC. Plays a role in wound healing and in the regulation of keratinocyte differentiation and proliferation via its role in alternative splicing. This Mus musculus (Mouse) protein is Serine/arginine-rich splicing factor 6 (Srsf6).